A 126-amino-acid chain; its full sequence is Ribosome-binding factor A (126 aa).

The protein belongs to the RbfA family. Monomer. Binds 30S ribosomal subunits, but not 50S ribosomal subunits or 70S ribosomes.

The protein localises to the cytoplasm. Its function is as follows. One of several proteins that assist in the late maturation steps of the functional core of the 30S ribosomal subunit. Associates with free 30S ribosomal subunits (but not with 30S subunits that are part of 70S ribosomes or polysomes). Required for efficient processing of 16S rRNA. May interact with the 5'-terminal helix region of 16S rRNA. This Nitrosospira multiformis (strain ATCC 25196 / NCIMB 11849 / C 71) protein is Ribosome-binding factor A.